We begin with the raw amino-acid sequence, 485 residues long: NADH-quinone oxidoreductase subunit N (485 aa).

Transmembrane regions (helical) follow at residues 8–28, 35–55, 71–91, 105–125, 127–147, 159–179, 203–223, 235–255, 271–291, 297–317, 326–346, 373–393, 408–430, and 455–475; these read LIAL…MLSI, FLNA…LWFV, GFAM…CTFA, FYLL…ANHL, SLFL…GYAF, YTIL…LVYA, LLAG…LVPF, PAPV…GVVM, VVLA…ALSQ, LLGY…IALQ, VGVY…VVSL, AAVM…LGFI, WWLV…RVAV, and IVVL…QPLI.

This sequence belongs to the complex I subunit 2 family. NDH-1 is composed of 13 different subunits. Subunits NuoA, H, J, K, L, M, N constitute the membrane sector of the complex.

Its subcellular location is the cell inner membrane. The enzyme catalyses a quinone + NADH + 5 H(+)(in) = a quinol + NAD(+) + 4 H(+)(out). Functionally, NDH-1 shuttles electrons from NADH, via FMN and iron-sulfur (Fe-S) centers, to quinones in the respiratory chain. The immediate electron acceptor for the enzyme in this species is believed to be ubiquinone. Couples the redox reaction to proton translocation (for every two electrons transferred, four hydrogen ions are translocated across the cytoplasmic membrane), and thus conserves the redox energy in a proton gradient. The chain is NADH-quinone oxidoreductase subunit N from Shigella sonnei (strain Ss046).